The chain runs to 614 residues: Dihydroxy-acid dehydratase (614 aa).

A Mg(2+)-binding site is contributed by D81. C122 is a [2Fe-2S] cluster binding site. 2 residues coordinate Mg(2+): D123 and K124. Residue K124 is modified to N6-carboxylysine. [2Fe-2S] cluster is bound at residue C195. A Mg(2+)-binding site is contributed by E491. The active-site Proton acceptor is the S517.

It belongs to the IlvD/Edd family. In terms of assembly, homodimer. [2Fe-2S] cluster serves as cofactor. It depends on Mg(2+) as a cofactor.

The catalysed reaction is (2R)-2,3-dihydroxy-3-methylbutanoate = 3-methyl-2-oxobutanoate + H2O. It catalyses the reaction (2R,3R)-2,3-dihydroxy-3-methylpentanoate = (S)-3-methyl-2-oxopentanoate + H2O. The protein operates within amino-acid biosynthesis; L-isoleucine biosynthesis; L-isoleucine from 2-oxobutanoate: step 3/4. It participates in amino-acid biosynthesis; L-valine biosynthesis; L-valine from pyruvate: step 3/4. In terms of biological role, functions in the biosynthesis of branched-chain amino acids. Catalyzes the dehydration of (2R,3R)-2,3-dihydroxy-3-methylpentanoate (2,3-dihydroxy-3-methylvalerate) into 2-oxo-3-methylpentanoate (2-oxo-3-methylvalerate) and of (2R)-2,3-dihydroxy-3-methylbutanoate (2,3-dihydroxyisovalerate) into 2-oxo-3-methylbutanoate (2-oxoisovalerate), the penultimate precursor to L-isoleucine and L-valine, respectively. In Rhodopseudomonas palustris (strain BisA53), this protein is Dihydroxy-acid dehydratase.